Reading from the N-terminus, the 238-residue chain is Ribonuclease PH (238 aa).

Phosphate-binding positions include R86 and 124-126 (GTR).

It belongs to the RNase PH family. Homohexameric ring arranged as a trimer of dimers.

It carries out the reaction tRNA(n+1) + phosphate = tRNA(n) + a ribonucleoside 5'-diphosphate. Phosphorolytic 3'-5' exoribonuclease that plays an important role in tRNA 3'-end maturation. Removes nucleotide residues following the 3'-CCA terminus of tRNAs; can also add nucleotides to the ends of RNA molecules by using nucleoside diphosphates as substrates, but this may not be physiologically important. Probably plays a role in initiation of 16S rRNA degradation (leading to ribosome degradation) during starvation. This Geotalea daltonii (strain DSM 22248 / JCM 15807 / FRC-32) (Geobacter daltonii) protein is Ribonuclease PH.